The primary structure comprises 758 residues: Deoxynucleotidyltransferase terminal-interacting protein 2 (758 aa).

Over residues 1 to 21 (MVVTRSGLSRTRLQESSQQKR) the composition is skewed to polar residues. The disordered stretch occupies residues 1–176 (MVVTRSGLSR…SQSGTVSDAE (176 aa)). A phosphoserine mark is found at serine 17, serine 133, serine 137, and serine 140. Over residues 128–143 (DEVVVSEAESHVSGVS) the composition is skewed to low complexity. The segment covering 155 to 172 (NKANSQRDSSQESQSGTV) has biased composition (polar residues). A phosphoserine mark is found at serine 173 and serine 183. Lysine 210 participates in a covalent cross-link: Glycyl lysine isopeptide (Lys-Gly) (interchain with G-Cter in SUMO2). Phosphoserine occurs at positions 229, 240, 248, and 255. The segment covering 231–255 (ATQLSARPLSQRNMPNVSDSETYNS) has biased composition (polar residues). Disordered stretches follow at residues 231 to 277 (ATQL…HQNL), 312 to 353 (KVIN…QLSS), 377 to 480 (DKRG…AEDL), and 501 to 552 (DKNF…DLLS). Residue lysine 317 forms a Glycyl lysine isopeptide (Lys-Gly) (interchain with G-Cter in SUMO2) linkage. Over residues 321–353 (RSLSEAQDTSLQQSVSQNHSSTPNKKPTFQLSS) the composition is skewed to polar residues. 2 positions are modified to phosphoserine: serine 324 and serine 330. Residues lysine 345 and lysine 384 each participate in a glycyl lysine isopeptide (Lys-Gly) (interchain with G-Cter in SUMO2) cross-link. The span at 377–387 (DKRGGSGKKSD) shows a compositional bias: basic and acidic residues. Polar residues predominate over residues 431–440 (LSMTQDTTDS). Residues 447–456 (SSDESQQSDS) show a composition bias toward low complexity. Residues serine 476 and serine 512 each carry the phosphoserine modification. Residues 512–541 (SEVAIEEEKEEEEKEEENSEEDSSDSDENK) are a coiled coil. A compositionally biased stretch (acidic residues) spans 515–550 (AIEEEKEEEEKEEENSEEDSSDSDENKDESSDEEDL). The segment at 550-607 (LLSNTKSKLLKLTSSSIDPGLNIKQLGGLYINFNVDKLQPHKETLTQIKEKKKNELLQ) is tdBR region; mediates interaction with DNTT. Glycyl lysine isopeptide (Lys-Gly) (interchain with G-Cter in SUMO2) cross-links involve residues lysine 560, lysine 586, and lysine 608. Threonine 612 carries the post-translational modification Phosphothreonine. The segment at 621-647 (VPPYSESKHRLQKQRRKERQKTAGNGW) is disordered. Lysine 628 participates in a covalent cross-link: Glycyl lysine isopeptide (Lys-Gly) (interchain with G-Cter in SUMO2). Positions 630-639 (RLQKQRRKER) are enriched in basic residues. Glycyl lysine isopeptide (Lys-Gly) (interchain with G-Cter in SUMO2) cross-links involve residues lysine 651, lysine 660, lysine 688, and lysine 733.

In terms of assembly, forms a ternary complex with DNTT and core histone; interaction with PCNA releases DNTT and H2A/H2B histones from this ternary complex. Interacts with ESR1, ESR2, PPARG and RXRA. Part of the small subunit (SSU) processome, composed of more than 70 proteins and the RNA chaperone small nucleolar RNA (snoRNA) U3.

Its subcellular location is the nucleus. The protein localises to the nucleolus. In terms of biological role, regulates the transcriptional activity of DNTT and ESR1. May function as a chromatin remodeling protein. Part of the small subunit (SSU) processome, first precursor of the small eukaryotic ribosomal subunit. During the assembly of the SSU processome in the nucleolus, many ribosome biogenesis factors, an RNA chaperone and ribosomal proteins associate with the nascent pre-rRNA and work in concert to generate RNA folding, modifications, rearrangements and cleavage as well as targeted degradation of pre-ribosomal RNA by the RNA exosome. This is Deoxynucleotidyltransferase terminal-interacting protein 2 (Dnttip2) from Mus musculus (Mouse).